The following is a 369-amino-acid chain: Phosphoribosyl pyrophosphate synthase-associated protein 2 (369 aa).

N-acetylmethionine is present on M1. T5 bears the Phosphothreonine mark. Residues S219, S227, and S233 each carry the phosphoserine modification.

This sequence belongs to the ribose-phosphate pyrophosphokinase family. As to quaternary structure, binds to PRPS1 and PRPS2. Ubiquitous.

Functionally, seems to play a negative regulatory role in 5-phosphoribose 1-diphosphate synthesis. This is Phosphoribosyl pyrophosphate synthase-associated protein 2 (PRPSAP2) from Homo sapiens (Human).